The sequence spans 32 residues: Enolase (32 aa).

Belongs to the enolase family. As to quaternary structure, homodimer. Mg(2+) is required as a cofactor.

Its subcellular location is the cytoplasm. The catalysed reaction is (2R)-2-phosphoglycerate = phosphoenolpyruvate + H2O. It functions in the pathway carbohydrate degradation; glycolysis; pyruvate from D-glyceraldehyde 3-phosphate: step 4/5. The polypeptide is Enolase (Imperata cylindrica (Cogon grass)).